The sequence spans 296 residues: Nucleotide-binding protein Spy49_0545 (296 aa).

13-20 (GMSGAGKT) provides a ligand contact to ATP. 63 to 66 (DMRS) is a binding site for GTP.

The protein belongs to the RapZ-like family.

Its function is as follows. Displays ATPase and GTPase activities. The chain is Nucleotide-binding protein Spy49_0545 from Streptococcus pyogenes serotype M49 (strain NZ131).